A 549-amino-acid polypeptide reads, in one-letter code: Formate--tetrahydrofolate ligase (549 aa).

60-67 lines the ATP pocket; sequence TPYGEGKT.

Belongs to the formate--tetrahydrofolate ligase family.

It carries out the reaction (6S)-5,6,7,8-tetrahydrofolate + formate + ATP = (6R)-10-formyltetrahydrofolate + ADP + phosphate. The protein operates within one-carbon metabolism; tetrahydrofolate interconversion. The sequence is that of Formate--tetrahydrofolate ligase from Campylobacter concisus (strain 13826).